A 104-amino-acid chain; its full sequence is Co-chaperonin GroES 2 (104 aa).

Belongs to the GroES chaperonin family. Heptamer of 7 subunits arranged in a ring. Interacts with the chaperonin GroEL.

It localises to the cytoplasm. Its function is as follows. Together with the chaperonin GroEL, plays an essential role in assisting protein folding. The GroEL-GroES system forms a nano-cage that allows encapsulation of the non-native substrate proteins and provides a physical environment optimized to promote and accelerate protein folding. GroES binds to the apical surface of the GroEL ring, thereby capping the opening of the GroEL channel. The polypeptide is Co-chaperonin GroES 2 (Rhodopseudomonas palustris (strain ATCC BAA-98 / CGA009)).